A 453-amino-acid polypeptide reads, in one-letter code: Chromosomal replication initiator protein DnaA (453 aa).

The domain I, interacts with DnaA modulators stretch occupies residues 1–73 (MSKEEIWDKV…ADLIEKAIGT (73 aa)). Residues 73–114 (TKLMPNFVIQEDLTEDKQVKDSAKAKSEAKPDVQAPQNSSED) form a domain II region. Over residues 91 to 103 (VKDSAKAKSEAKP) the composition is skewed to basic and acidic residues. The interval 91–113 (VKDSAKAKSEAKPDVQAPQNSSE) is disordered. The tract at residues 115 to 331 (QFNVHNTFET…GALTRVIAYS (217 aa)) is domain III, AAA+ region. 4 residues coordinate ATP: Gly-159, Gly-161, Lys-162, and Thr-163. The segment at 332-453 (RLQNEAITTE…ENLEKEIRNQ (122 aa)) is domain IV, binds dsDNA.

The protein belongs to the DnaA family. As to quaternary structure, oligomerizes as a right-handed, spiral filament on DNA at oriC.

The protein resides in the cytoplasm. Its function is as follows. Plays an essential role in the initiation and regulation of chromosomal replication. ATP-DnaA binds to the origin of replication (oriC) to initiate formation of the DNA replication initiation complex once per cell cycle. Binds the DnaA box (a 9 base pair repeat at the origin) and separates the double-stranded (ds)DNA. Forms a right-handed helical filament on oriC DNA; dsDNA binds to the exterior of the filament while single-stranded (ss)DNA is stabiized in the filament's interior. The ATP-DnaA-oriC complex binds and stabilizes one strand of the AT-rich DNA unwinding element (DUE), permitting loading of DNA polymerase. After initiation quickly degrades to an ADP-DnaA complex that is not apt for DNA replication. Binds acidic phospholipids. The protein is Chromosomal replication initiator protein DnaA of Staphylococcus carnosus (strain TM300).